Reading from the N-terminus, the 855-residue chain is DNA mismatch repair protein MutS (855 aa).

ATP is bound at residue 621–628; that stretch reads GPNMGGKS.

The protein belongs to the DNA mismatch repair MutS family.

In terms of biological role, this protein is involved in the repair of mismatches in DNA. It is possible that it carries out the mismatch recognition step. This protein has a weak ATPase activity. In Francisella tularensis subsp. holarctica (strain OSU18), this protein is DNA mismatch repair protein MutS.